A 559-amino-acid polypeptide reads, in one-letter code: Suppressor of tumorigenicity 7 protein-like (559 aa).

3 helical membrane-spanning segments follow: residues 39–59, 83–103, and 513–533; these read GLAN…LYAL, FYVA…IFEW, and LPFF…IALL.

This sequence belongs to the ST7 family.

Its subcellular location is the membrane. The protein is Suppressor of tumorigenicity 7 protein-like (St7l) of Rattus norvegicus (Rat).